Here is a 272-residue protein sequence, read N- to C-terminus: Phosphatidylglycerol--prolipoprotein diacylglyceryl transferase (272 aa).

3 helical membrane-spanning segments follow: residues 19 to 39 (ISIR…YFLV), 58 to 78 (LNTV…VVFY), and 94 to 114 (WHGG…GLIF). Arg141 provides a ligand contact to a 1,2-diacyl-sn-glycero-3-phospho-(1'-sn-glycerol). 2 helical membrane-spanning segments follow: residues 207-227 (GTIL…IENF) and 234-254 (LGFI…MILC).

Belongs to the Lgt family.

The protein resides in the cell inner membrane. It carries out the reaction L-cysteinyl-[prolipoprotein] + a 1,2-diacyl-sn-glycero-3-phospho-(1'-sn-glycerol) = an S-1,2-diacyl-sn-glyceryl-L-cysteinyl-[prolipoprotein] + sn-glycerol 1-phosphate + H(+). It participates in protein modification; lipoprotein biosynthesis (diacylglyceryl transfer). In terms of biological role, catalyzes the transfer of the diacylglyceryl group from phosphatidylglycerol to the sulfhydryl group of the N-terminal cysteine of a prolipoprotein, the first step in the formation of mature lipoproteins. The chain is Phosphatidylglycerol--prolipoprotein diacylglyceryl transferase from Desulfotalea psychrophila (strain LSv54 / DSM 12343).